A 370-amino-acid chain; its full sequence is mRNA cap guanine-N(7) methyltransferase 1 (370 aa).

Residues 1 to 11 (MKRGFSDSPSS) are compositionally biased toward low complexity. The interval 1 to 34 (MKRGFSDSPSSSAPPPSSRFKSNPEGDSQFLEDE) is disordered. The region spanning 61–341 (SPIIHLKKLN…LYLSFVLRKR (281 aa)) is the mRNA cap 0 methyltransferase domain. 70-71 (NN) contacts mRNA. S-adenosyl-L-methionine is bound by residues Lys-74, Ala-92, Asp-114, 150–151 (DC), and 172–174 (QFA).

Belongs to the class I-like SAM-binding methyltransferase superfamily. mRNA cap 0 methyltransferase family.

It is found in the nucleus. The catalysed reaction is a 5'-end (5'-triphosphoguanosine)-ribonucleoside in mRNA + S-adenosyl-L-methionine = a 5'-end (N(7)-methyl 5'-triphosphoguanosine)-ribonucleoside in mRNA + S-adenosyl-L-homocysteine. Functionally, mRNA-capping methyltransferase that methylates the N7 position of the added guanosine to the 5'-cap structure of mRNAs. Binds RNA containing 5'-terminal GpppC. In Arabidopsis thaliana (Mouse-ear cress), this protein is mRNA cap guanine-N(7) methyltransferase 1.